The primary structure comprises 350 residues: WD repeat-containing protein DWA2 (350 aa).

WD repeat units follow at residues 39–79 (KEEN…FDQR), 118–158 (AHVG…KSAE), 166–205 (GMRH…KNNS), 206–246 (IERA…FPVQ), 250–290 (GHTH…EHKT), and 311–350 (DYED…LPRR).

As to quaternary structure, interacts with ABI5 and DDB1A and DWA1.

Its subcellular location is the nucleus. It functions in the pathway protein modification; protein ubiquitination. Component of the CUL4-RBX1-DDB1-DWA1/DWA2 E3 ubiquitin-protein ligase complex that acts as a negative regulator in abscisic acid (ABA) signaling. May function as the substrate recognition module within this complex leading to ABI5 degradation. Functionally redundant with DWA1. This chain is WD repeat-containing protein DWA2 (DWA2), found in Arabidopsis thaliana (Mouse-ear cress).